The sequence spans 359 residues: G-protein coupled receptor 15 (359 aa).

At 1 to 33 the chain is on the extracellular side; the sequence is MDPEETSVYLDYYYATSPNPDIRETHSHVPYTS. The chain crosses the membrane as a helical span at residues 34–54; it reads VFLPVFYTAVFLTGVLGNLVL. Topologically, residues 55–69 are cytoplasmic; sequence MGALHFKPGSRRLID. Residues 70–90 traverse the membrane as a helical segment; the sequence is IFIINLAASDFIFLVTLPLWV. Residues 91–120 lie on the Extracellular side of the membrane; it reads DKEASLGLWRTGSFLCKGSSYMISVNMHCS. The helical transmembrane segment at 121 to 141 threads the bilayer; that stretch reads VFLLTCMSVDRYLAIVCPVVS. Topologically, residues 142–149 are cytoplasmic; that stretch reads RKFRRTDC. Residues 150–170 form a helical membrane-spanning segment; that stretch reads AYVVCASIWFISCLLGLPTLL. Residues 171-192 are Extracellular-facing; sequence SRELTLIDDKPYCAEKKATPLK. The helical transmembrane segment at 193-213 threads the bilayer; it reads LIWSLVALIFTFFVPLLNIVT. Residues 214–239 lie on the Cytoplasmic side of the membrane; it reads CYCCIARKLCAHYQQSGRHNKKLKKS. A helical membrane pass occupies residues 240-260; sequence IKIILIVVAAFLVSWLPFNTF. At 261 to 283 the chain is on the extracellular side; the sequence is KLLAIVSGLQERYFPSAMLQLGM. A helical transmembrane segment spans residues 284–304; sequence EVSGPLAFANSCVNPFIYYIF. Over 305-359 the chain is Cytoplasmic; the sequence is DSYIRRAIVHCLCPCLKNYDFGSSTETSDSHLTKALSTFIHAEDFTRRRKRSVSL. Residue Ser-358 is modified to Phosphoserine.

It belongs to the G-protein coupled receptor 1 family. In terms of assembly, interacts with adapter YWHAE; this interaction promotes ER-to-Golgi transport of GPR15. Phosphorylation is necessary for YWHAE binding and efficient surface expression. In terms of processing, O-glycosylated. Sialylated O-glycans in the N-terminal tail inhibits binding of GPR15LG. Post-translationally, sulfation is required for efficient binding of GPR15LG.

It is found in the cell membrane. In terms of biological role, g protein-coupled receptor that plays an important role in immune homeostasis. Acts via its natural ligand GPR15LG, a chemokine-like polypeptide strongly expressed in gastrointestinal tissues. GPR15-GPR15LG signaling axis regulates intestinal homeostasis and inflammation through the migration of immune cells. Controls thereby the specific homing of T-cells, particularly FOXP3+ regulatory T-cells (Tregs), to the large intestine lamina propria. Also required for skin localization of thymus-derived dendritic epidermal T-cells. Plays an important role in mediating cytoprotective function as well as angiogenesis of thrombomodulin. Mechanistically, preferentially signals through the Gi/o pathway to inhibit adenylate cyclase activity and activate a phosphatidylinositol-calcium second messenger system that regulates the release of Ca(2+) ions from intracellular stores. The protein is G-protein coupled receptor 15 (GPR15) of Macaca fascicularis (Crab-eating macaque).